The primary structure comprises 628 residues: Chaperone protein HtpG (628 aa).

Residues 1–339 (MSNNQQTLGF…SNDLPLNVSR (339 aa)) are a; substrate-binding. The b stretch occupies residues 340 to 556 (EILQDNKTTA…NDQMTTQMAK (217 aa)). A c region spans residues 557–628 (LFAMSGQPVP…IKRVNTLLAG (72 aa)).

The protein belongs to the heat shock protein 90 family. In terms of assembly, homodimer.

It localises to the cytoplasm. Molecular chaperone. Has ATPase activity. This chain is Chaperone protein HtpG, found in Actinobacillus succinogenes (strain ATCC 55618 / DSM 22257 / CCUG 43843 / 130Z).